We begin with the raw amino-acid sequence, 516 residues long: Alstonine synthase (516 aa).

The chain crosses the membrane as a helical span at residues 6-26 (NFSLTSPIFLLLSSLFLIILL). Cys-453 contributes to the heme binding site.

Belongs to the cytochrome P450 family. Heme is required as a cofactor. Highly expressed in stems. Expressed at low levels in roots.

Its subcellular location is the endoplasmic reticulum membrane. It catalyses the reaction tetrahydroalstonine + A + reduced [NADPH--hemoprotein reductase] + O2 = alstonine + AH2 + oxidized [NADPH--hemoprotein reductase] + 2 H2O + H(+). It carries out the reaction ajmalicine + A + reduced [NADPH--hemoprotein reductase] + O2 = serpentine + AH2 + oxidized [NADPH--hemoprotein reductase] + 2 H2O + H(+). It participates in alkaloid biosynthesis. Its function is as follows. Involved in monoterpene indole alkaloids (MIAs) biosynthesis. Converts by aromatization the tetrahydro-beta-carboline alkaloids tetrahydroalstonine and ajmalicine to the corresponding beta-carboline alkaloids alstonine and serpentine, respectively. In Catharanthus roseus (Madagascar periwinkle), this protein is Alstonine synthase.